The chain runs to 309 residues: Homoserine kinase (309 aa).

ATP is bound at residue 91 to 101; sequence PVGSGLGSSAC.

This sequence belongs to the GHMP kinase family. Homoserine kinase subfamily.

It is found in the cytoplasm. It carries out the reaction L-homoserine + ATP = O-phospho-L-homoserine + ADP + H(+). It functions in the pathway amino-acid biosynthesis; L-threonine biosynthesis; L-threonine from L-aspartate: step 4/5. In terms of biological role, catalyzes the ATP-dependent phosphorylation of L-homoserine to L-homoserine phosphate. This chain is Homoserine kinase, found in Hamiltonella defensa subsp. Acyrthosiphon pisum (strain 5AT).